Reading from the N-terminus, the 414-residue chain is Serine hydroxymethyltransferase (414 aa).

(6S)-5,6,7,8-tetrahydrofolate contacts are provided by residues leucine 116 and 120 to 122 (GHL). Lysine 224 is modified (N6-(pyridoxal phosphate)lysine). 348–350 (SPF) is a (6S)-5,6,7,8-tetrahydrofolate binding site.

Belongs to the SHMT family. In terms of assembly, homodimer. Pyridoxal 5'-phosphate serves as cofactor.

Its subcellular location is the cytoplasm. The catalysed reaction is (6R)-5,10-methylene-5,6,7,8-tetrahydrofolate + glycine + H2O = (6S)-5,6,7,8-tetrahydrofolate + L-serine. It participates in one-carbon metabolism; tetrahydrofolate interconversion. The protein operates within amino-acid biosynthesis; glycine biosynthesis; glycine from L-serine: step 1/1. In terms of biological role, catalyzes the reversible interconversion of serine and glycine with tetrahydrofolate (THF) serving as the one-carbon carrier. This reaction serves as the major source of one-carbon groups required for the biosynthesis of purines, thymidylate, methionine, and other important biomolecules. Also exhibits THF-independent aldolase activity toward beta-hydroxyamino acids, producing glycine and aldehydes, via a retro-aldol mechanism. The protein is Serine hydroxymethyltransferase of Campylobacter jejuni subsp. doylei (strain ATCC BAA-1458 / RM4099 / 269.97).